The chain runs to 100 residues: Large ribosomal subunit protein uL23 (100 aa).

Belongs to the universal ribosomal protein uL23 family. As to quaternary structure, part of the 50S ribosomal subunit. Contacts protein L29, and trigger factor when it is bound to the ribosome.

In terms of biological role, one of the early assembly proteins it binds 23S rRNA. One of the proteins that surrounds the polypeptide exit tunnel on the outside of the ribosome. Forms the main docking site for trigger factor binding to the ribosome. In Thermotoga maritima (strain ATCC 43589 / DSM 3109 / JCM 10099 / NBRC 100826 / MSB8), this protein is Large ribosomal subunit protein uL23.